The chain runs to 520 residues: Ribonuclease Y (520 aa).

A helical membrane pass occupies residues 3-23; sequence FILVLCTVSSLFVGGGTGIFL. Residues 209-272 form the KH domain; the sequence is TVTAVTLPSE…QVAKMALERL (64 aa). Positions 335-429 constitute an HD domain; the sequence is VLRHSIEVAS…VQASDCLSGA (95 aa).

Belongs to the RNase Y family.

The protein resides in the cell membrane. Endoribonuclease that initiates mRNA decay. This chain is Ribonuclease Y, found in Lawsonia intracellularis (strain PHE/MN1-00).